The sequence spans 720 residues: DNA replication licensing factor mcm7-A (720 aa).

Residues 183 to 210 form a C4-type zinc finger; sequence CDQCGAETYQPIQSPTFMPLIMCPSREC. Positions 331–537 constitute an MCM domain; that stretch reads FYEKLAASIA…NDLRLAQHIT (207 aa). Positions 344, 383, 385, 386, 387, 488, 513, and 603 each coordinate ATP. The Arginine finger motif lies at 512–515; sequence SRFD.

The protein belongs to the MCM family. Component of the mcm2-7 complex (RLF-M). The complex forms a toroidal hexameric ring with the proposed subunit order mcm2-mcm6-mcm4-mcm7-mcm3-mcm5. The heterodimer of mmcm3/mcm5 interacts with mcm4, mmcm6, mcm7 and weakly with mcm2. The N-terminus is required for interaction with mmcm3, though this interaction may not be direct, and remains in a complex with mmcm3 throughout the cell cycle. Begins to associate with zmcm6 at the neurula stage. Component of the replisome complex. Component of the CMG helicase complex, composed of the mcm2-7 complex, the GINS complex and cdc45. Ubiquitinated by traip when forks converge following formation of DNA interstrand cross-links. Ubiquitinated via 'Lys-6'- and 'Lys-63'-linked polyubiquitination by traip. Short ubiquitin chains on mcm7 promote recruitment of DNA glycosylase neil3. If the interstrand cross-link cannot be cleaved by neil3, the ubiquitin chains continue to grow on mcm7, promoting the unloading of the CMG helicase complex by the vcp/p97 ATPase.

Its subcellular location is the nucleus. It is found in the chromosome. The catalysed reaction is ATP + H2O = ADP + phosphate + H(+). Its function is as follows. Acts as a component of the mcm2-7 complex (mcm complex) which is the putative replicative helicase essential for 'once per cell cycle' DNA replication initiation and elongation in eukaryotic cells. The active ATPase sites in the mcm2-7 ring are formed through the interaction surfaces of two neighboring subunits such that a critical structure of a conserved arginine finger motif is provided in trans relative to the ATP-binding site of the Walker A box of the adjacent subunit. The six ATPase active sites, however, are likely to contribute differentially to the complex helicase activity. The existence of maternal and zygotic forms of mcm3 and mcm6 suggests that specific forms of mcm2-7 complexes may be used during different stages of development. The sequence is that of DNA replication licensing factor mcm7-A (mcm7-a) from Xenopus laevis (African clawed frog).